A 484-amino-acid polypeptide reads, in one-letter code: Zinc metalloproteinase-disintegrin BlatH1 (484 aa).

Positions M1 to S20 are cleaved as a signal peptide. A propeptide spanning residues I21–P190 is cleaved from the precursor. Position 191 is a pyrrolidone carboxylic acid (Glu) (E191). One can recognise a Peptidase M12B domain in the interval K199 to P395. E202 provides a ligand contact to Ca(2+). N259 carries an N-linked (GlcNAc...) asparagine glycan. D286 contacts Ca(2+). Residue N297 is glycosylated (N-linked (GlcNAc...) asparagine). Cystine bridges form between C310–C390, C350–C374, and C352–C357. A Zn(2+)-binding site is contributed by H335. E336 is a catalytic residue. Zn(2+)-binding residues include H339 and H345. N-linked (GlcNAc...) asparagine glycosylation is present at N373. 7 residues coordinate Ca(2+): C390, N393, V405, N408, E412, E415, and D418. The Disintegrin domain occupies P403–G484. Intrachain disulfides connect C406–C425, C417–C435, C419–C430, C429–C452, C443–C449, C448–C473, and C461–C480. The TDN-tripeptide signature appears at T465–N467.

It belongs to the venom metalloproteinase (M12B) family. P-II subfamily. P-IIc sub-subfamily. In terms of assembly, homodimer. The cofactor is Zn(2+). Post-translationally, the N-terminus is blocked. In terms of tissue distribution, expressed by the venom gland.

It localises to the secreted. With respect to regulation, platelet aggregation in inhibited by the metalloproteinase inhibitors EDTA and Batimastat. The hemorrhagic activity is not inhibited by the plasma proteinase inhibitor alpha2-macroglobulin, although the SVMP is able to cleave this plasma inhibitor, generating a 90 kDa product. Its function is as follows. Snake venom zinc metalloprotease-disintegrin that hydrolyzes azocasein, gelatin and fibrinogen (Aalpha and Bbeta chains and partially gamma-chain), and exerts a potent local and systemic hemorrhagic activity in mice. It inhibits ADP- and collagen-induced human platelet aggregation (IC(50) = 0.3 uM and 0.7 uM for ADP and collagen, respectively). This inhibition is dependent of protease activity, and probably occurs through the degradation of an unknown platelet receptor. The polypeptide is Zinc metalloproteinase-disintegrin BlatH1 (Bothriechis lateralis (Side-striped palm pitviper)).